A 261-amino-acid chain; its full sequence is Succinate dehydrogenase [ubiquinone] iron-sulfur subunit, mitochondrial (261 aa).

A 2Fe-2S ferredoxin-type domain is found at 31–122; that stretch reads FKIYRWNPDT…DVKIYPLPHM (92 aa). [2Fe-2S] cluster-binding residues include Cys-82, Cys-87, Cys-90, and Cys-102. The 4Fe-4S ferredoxin-type domain occupies 164–194; that stretch reads DRKKLDGLYECILCACCSTACPSYWWNNEQY. [4Fe-4S] cluster contacts are provided by Cys-174, Cys-177, and Cys-180. Cys-184 is a binding site for [3Fe-4S] cluster. Trp-189 contacts a ubiquinone. The [3Fe-4S] cluster site is built by Cys-231 and Cys-237. Cys-241 contacts [4Fe-4S] cluster.

It belongs to the succinate dehydrogenase/fumarate reductase iron-sulfur protein family. Component of complex II composed of four subunits: a flavoprotein (FP), an iron-sulfur protein (IP), and a cytochrome b composed of a large and a small subunit. Requires [2Fe-2S] cluster as cofactor. [3Fe-4S] cluster is required as a cofactor. The cofactor is [4Fe-4S] cluster.

Its subcellular location is the mitochondrion inner membrane. The catalysed reaction is a quinone + succinate = fumarate + a quinol. It functions in the pathway carbohydrate metabolism; tricarboxylic acid cycle; fumarate from succinate (eukaryal route): step 1/1. Functionally, iron-sulfur protein (IP) subunit of succinate dehydrogenase (SDH) that is involved in complex II of the mitochondrial electron transport chain and is responsible for transferring electrons from succinate to ubiquinone (coenzyme Q). The protein is Succinate dehydrogenase [ubiquinone] iron-sulfur subunit, mitochondrial (SDH2) of Eremothecium gossypii (strain ATCC 10895 / CBS 109.51 / FGSC 9923 / NRRL Y-1056) (Yeast).